The chain runs to 250 residues: 2,3-bisphosphoglycerate-dependent phosphoglycerate mutase (250 aa).

Substrate contacts are provided by residues 8–15, 21–22, Arg-60, 87–90, Lys-98, 114–115, and 183–184; these read RHGESQWN, TG, ERHY, RR, and GN. His-9 acts as the Tele-phosphohistidine intermediate in catalysis. Glu-87 functions as the Proton donor/acceptor in the catalytic mechanism.

Belongs to the phosphoglycerate mutase family. BPG-dependent PGAM subfamily. In terms of assembly, homodimer.

It catalyses the reaction (2R)-2-phosphoglycerate = (2R)-3-phosphoglycerate. Its pathway is carbohydrate degradation; glycolysis; pyruvate from D-glyceraldehyde 3-phosphate: step 3/5. In terms of biological role, catalyzes the interconversion of 2-phosphoglycerate and 3-phosphoglycerate. This chain is 2,3-bisphosphoglycerate-dependent phosphoglycerate mutase, found in Bordetella parapertussis (strain 12822 / ATCC BAA-587 / NCTC 13253).